Reading from the N-terminus, the 1311-residue chain is Zinc finger protein 521 (1311 aa).

The segment at 47-67 (HSCDSCLQVFESLSDITEHKI) adopts a C2H2-type 1; degenerate zinc-finger fold. The segment at 81-108 (DPSCSWPASSPSSKDQTSPSHGEGCDFG) is disordered. Positions 83–102 (SCSWPASSPSSKDQTSPSHG) are enriched in low complexity. 7 consecutive C2H2-type zinc fingers follow at residues 118–140 (YPCQ…EQSH), 146–168 (FKCT…IKLH), 174–196 (YHCS…LKTH), 202–224 (YKCA…MQVH), 246–269 (QKCS…AECH), 281–304 (LQCM…EQVH), and 310–332 (NSCS…MDSH). The interval 357-398 (TTPDSNLSVDSSTMVEAAPPIPKSRGRKRAAQQTSDMTGPSS) is disordered. Polar residues-rich tracts occupy residues 359-370 (PDSNLSVDSSTM) and 387-398 (AQQTSDMTGPSS). The C2H2-type 9; degenerate zinc-finger motif lies at 405 to 429 (YSCIYCNKQLFSSLAVLQIHLKTMH). C2H2-type zinc fingers lie at residues 437-460 (HICQ…KQVH), 477-500 (YQCN…RCSH), and 513-536 (FFCP…RQVH). The residue at position 546 (S546) is a Phosphoserine. The segment at 560 to 585 (YSCSYCTNSPIFNSVLKLNKHIKENH) adopts a C2H2-type 13; atypical zinc-finger fold. Phosphoserine is present on residues S605 and S608. 7 consecutive C2H2-type zinc fingers follow at residues 634 to 656 (YICN…LKTH), 664 to 686 (LTCP…VTIH), 694 to 717 (YICE…LDMH), 722 to 745 (FRCT…AVKH), 752 to 775 (YRCT…KHNH), 783 to 805 (HKCI…ITTH), and 809 to 832 (YNCR…REKH). The disordered stretch occupies residues 863–883 (TNSQESHNSHDGSEEDVDSSE). The C2H2-type 21; degenerate zinc finger occupies 886-908 (YGCDICGAAYTMETLLQNHQLRD). C2H2-type zinc fingers lie at residues 930-952 (YKCN…MQTH), 959-981 (YMCP…KVTH), and 1020-1042 (FRCV…GTFH). The C2H2-type 25; degenerate zinc-finger motif lies at 1065–1083 (YKCASCLKEFRSKQDLVKL). A compositionally biased stretch (low complexity) spans 1105 to 1119 (PGLSLPPGASRPGLG). Positions 1105–1136 (PGLSLPPGASRPGLGQNESLSAMEGKGKAGGL) are disordered. 5 consecutive C2H2-type zinc fingers follow at residues 1138-1161 (TRCS…QTVH), 1195-1217 (YQCI…VANH), 1225-1247 (HECK…LIEH), 1256-1279 (FKCP…FSAH), and 1286-1309 (YDCT…MTQH). Residue K1146 forms a Glycyl lysine isopeptide (Lys-Gly) (interchain with G-Cter in SUMO2) linkage.

It belongs to the krueppel C2H2-type zinc-finger protein family. In terms of assembly, interacts with EBF1. Interacts with SMAD1 and SMAD4. As to expression, widely expressed. Expressed in all B-cell stages.

It localises to the nucleus. Transcription factor that can both act as an activator or a repressor depending on the context. Involved in BMP signaling and in the regulation of the immature compartment of the hematopoietic system. Associates with SMADs in response to BMP2 leading to activate transcription of BMP target genes. Acts as a transcriptional repressor via its interaction with EBF1, a transcription factor involved specification of B-cell lineage; this interaction preventing EBF1 to bind DNA and activate target genes. The polypeptide is Zinc finger protein 521 (Znf521) (Mus musculus (Mouse)).